We begin with the raw amino-acid sequence, 452 residues long: Serine carboxypeptidase-like 26 (452 aa).

The signal sequence occupies residues 1-20 (MARLLLLFFFFLILLHYASC). N-linked (GlcNAc...) asparagine glycans are attached at residues Asn52 and Asn138. Disulfide bonds link Cys87–Cys338, Cys244–Cys256, and Cys280–Cys306. The active site involves Ser180. The N-linked (GlcNAc...) asparagine glycan is linked to Asn327. Residues Asp375 and His427 contribute to the active site.

This sequence belongs to the peptidase S10 family. Ubiquitous.

Its subcellular location is the secreted. Its function is as follows. Probable carboxypeptidase. In Arabidopsis thaliana (Mouse-ear cress), this protein is Serine carboxypeptidase-like 26 (SCPL26).